The following is a 280-amino-acid chain: Ribonuclease P protein subunit p38 (280 aa).

The residue at position 2 (Ala2) is an N-acetylalanine. 3 positions are modified to phosphoserine: Ser12, Ser221, and Ser230. The interval 202-227 is disordered; sequence WLPDRTQGPTDSLETEPSESQDNEIL. The span at 214–226 shows a compositional bias: acidic residues; it reads LETEPSESQDNEI. The tract at residues 254 to 280 is disordered; that stretch reads QPLKIKKLIPNPSKIRKPPKSKKSISK. Over residues 267–280 the composition is skewed to basic residues; it reads KIRKPPKSKKSISK.

This sequence belongs to the eukaryotic ribosomal protein eL8 family. In terms of assembly, component of nuclear RNase P and RNase MRP ribonucleoproteins. RNase P consists of a catalytic RNA moiety and about 10 protein subunits; POP1, POP4, POP5, POP7, RPP14, RPP21, RPP25, RPP30, RPP38 and RPP40. Within the RNase P complex, POP1, POP7 and RPP25 form the 'finger' subcomplex, POP5, RPP14, RPP40 and homodimeric RPP30 form the 'palm' subcomplex, and RPP21, POP4 and RPP38 form the 'wrist' subcomplex. All subunits of the RNase P complex interact with the catalytic RNA. Several subunits of RNase P are also part of the RNase MRP complex. RNase MRP consists of a catalytic RNA moiety and about 8 protein subunits; POP1, POP7, RPP25, RPP30, RPP38, RPP40 and possibly also POP4 and POP5.

Its subcellular location is the nucleus. It is found in the nucleolus. Functionally, component of ribonuclease P, a ribonucleoprotein complex that generates mature tRNA molecules by cleaving their 5'-ends. Also a component of the MRP ribonuclease complex, which cleaves pre-rRNA sequences. The protein is Ribonuclease P protein subunit p38 (Rpp38) of Mus musculus (Mouse).